The chain runs to 292 residues: Phosphoribulokinase 2 (292 aa).

An ATP-binding site is contributed by 12–20; it reads GSSGAGTST.

Belongs to the phosphoribulokinase family.

It catalyses the reaction D-ribulose 5-phosphate + ATP = D-ribulose 1,5-bisphosphate + ADP + H(+). The protein operates within carbohydrate biosynthesis; Calvin cycle. This Cereibacter sphaeroides (Rhodobacter sphaeroides) protein is Phosphoribulokinase 2 (prkB).